The following is a 431-amino-acid chain: Salivary plasminogen activator beta (431 aa).

Residues 1–36 (MVNTMKTKLLCVLLLCGAVFSLPRQETYRQLARGSR) form the signal peptide. Residues 37–75 (AYGGCSELRCFNGGTCWQAASFSDFVCQCPKGYTGKQCE) form the EGF-like domain. Disulfide bonds link C41-C52, C46-C63, C65-C74, C82-C163, C103-C145, C134-C158, C168-C299, C211-C227, C219-C288, C313-C388, C345-C361, and C378-C406. The Kringle domain occupies 82–163 (CYKDQGVTYR…ILEFCSVPVC (82 aa)). N139 is a glycosylation site (N-linked (GlcNAc...) asparagine). Positions 180-430 (STGGLFTDIT…YLGWIRDNMR (251 aa)) constitute a Peptidase S1 domain. Active-site charge relay system residues include H226 and D275. A glycan (N-linked (GlcNAc...) asparagine) is linked at N352. S382 serves as the catalytic Charge relay system.

This sequence belongs to the peptidase S1 family. As to quaternary structure, monomer.

Its subcellular location is the secreted. It carries out the reaction Specific cleavage of Arg-|-Val bond in plasminogen to form plasmin.. In terms of biological role, probably essential to support the feeding habits of this exclusively haematophagous animal. Probable potent thrombolytic agent. The sequence is that of Salivary plasminogen activator beta from Desmodus rotundus (Vampire bat).